Reading from the N-terminus, the 384-residue chain is Trophoblast glycoprotein-like (384 aa).

The first 30 residues, Met-1–Pro-30, serve as a signal peptide directing secretion. 2 disulfides stabilise this stretch: Cys-31–Cys-37 and Cys-35–Cys-47. The Extracellular portion of the chain corresponds to Cys-31 to Ser-309. LRR repeat units follow at residues Pro-61 to Gly-84, Leu-95 to Gly-118, Leu-119 to Gly-142, Leu-173 to Leu-196, and Arg-198 to Ala-219. An N-linked (GlcNAc...) asparagine glycan is attached at Asn-66. Cystine bridges form between Cys-240–Cys-266 and Cys-242–Cys-287. The helical transmembrane segment at Tyr-310 to Leu-330 threads the bilayer. The Cytoplasmic segment spans residues Asn-331–Leu-384. The segment at Ala-361–Leu-384 is disordered. Low complexity predominate over residues Pro-367–Leu-384.

It localises to the membrane. The protein is Trophoblast glycoprotein-like (Tpbgl) of Mus musculus (Mouse).